The chain runs to 283 residues: Phosphatidylglycerol--prolipoprotein diacylglyceryl transferase (283 aa).

A run of 4 helical transmembrane segments spans residues 17 to 37, 56 to 76, 92 to 112, and 117 to 137; these read LAVRWYALSYILGFILFTFLG, FLTWGILGVIFGGRLGYVLFY, WEGGMSFHGGFLGVVIAIWLF, and GIGFLKLMDTVAPLVPLGLAS. Residue R139 coordinates a 1,2-diacyl-sn-glycero-3-phospho-(1'-sn-glycerol). The next 3 helical transmembrane spans lie at 194–214, 222–242, and 255–275; these read PSQLYQFALEGICLFAVVWLF, GQVASLFLGGYGIFRFIAEFA, and GLSMGQWLSVPMIVLGIVGFV.

The protein belongs to the Lgt family.

The protein localises to the cell inner membrane. It catalyses the reaction L-cysteinyl-[prolipoprotein] + a 1,2-diacyl-sn-glycero-3-phospho-(1'-sn-glycerol) = an S-1,2-diacyl-sn-glyceryl-L-cysteinyl-[prolipoprotein] + sn-glycerol 1-phosphate + H(+). It participates in protein modification; lipoprotein biosynthesis (diacylglyceryl transfer). Catalyzes the transfer of the diacylglyceryl group from phosphatidylglycerol to the sulfhydryl group of the N-terminal cysteine of a prolipoprotein, the first step in the formation of mature lipoproteins. The chain is Phosphatidylglycerol--prolipoprotein diacylglyceryl transferase from Neisseria meningitidis serogroup C (strain 053442).